The sequence spans 305 residues: Cytochrome c biogenesis protein CcsA (305 aa).

The next 8 helical transmembrane spans lie at 11-31 (ANAS…KAIF), 36-56 (ILQL…ALLL), 75-95 (LMFL…YIQI), 97-117 (FIGF…TFFL), 142-162 (IMMA…AFLF), 212-232 (TIGI…VWAN), 239-259 (WSWD…AIYL), and 273-293 (AIVA…VNLL).

It belongs to the CcmF/CycK/Ccl1/NrfE/CcsA family. As to quaternary structure, may interact with Ccs1.

The protein resides in the plastid. It localises to the chloroplast thylakoid membrane. Its function is as follows. Required during biogenesis of c-type cytochromes (cytochrome c6 and cytochrome f) at the step of heme attachment. The sequence is that of Cytochrome c biogenesis protein CcsA from Mesostigma viride (Green alga).